We begin with the raw amino-acid sequence, 393 residues long: Putative serpin-Z6A (393 aa).

Residues 336–360 (GTEAAAATAVLMEGAARYAPPPPPR) are RCL.

It belongs to the serpin family.

Probable serine protease inhibitor. The protein is Putative serpin-Z6A of Oryza sativa subsp. japonica (Rice).